A 472-amino-acid chain; its full sequence is Inactive CLIP domain-containing serine protease A3 (472 aa).

Helical transmembrane passes span 51-71 (ISFV…WSSM) and 78-98 (LPAL…HTYA). N-linked (GlcNAc...) asparagine glycosylation is found at N122, N133, N149, and N152. The Peptidase S1 domain maps to 223-470 (VAAAKAPAAG…YVPWITSTVS (248 aa)). 3 disulfide bridges follow: C354-C428, C386-C408, and C418-C446.

The protein belongs to the peptidase S1 family. CLIP subfamily. As to expression, expressed at highest levels in head and salivary gland. Expressed in ovary and carcass. Minimal expression in midgut.

It localises to the membrane. In terms of biological role, probable inactive serine protease. Induces migration of cultured mouse embryonic fibroblasts. (Microbial infection) Promotes dengue virus type 2 replication in the host. This Aedes aegypti (Yellowfever mosquito) protein is Inactive CLIP domain-containing serine protease A3.